A 269-amino-acid chain; its full sequence is Tryptophan synthase alpha chain (269 aa).

Catalysis depends on proton acceptor residues E49 and D60.

The protein belongs to the TrpA family. In terms of assembly, tetramer of two alpha and two beta chains.

It catalyses the reaction (1S,2R)-1-C-(indol-3-yl)glycerol 3-phosphate + L-serine = D-glyceraldehyde 3-phosphate + L-tryptophan + H2O. Its pathway is amino-acid biosynthesis; L-tryptophan biosynthesis; L-tryptophan from chorismate: step 5/5. Its function is as follows. The alpha subunit is responsible for the aldol cleavage of indoleglycerol phosphate to indole and glyceraldehyde 3-phosphate. This chain is Tryptophan synthase alpha chain, found in Pseudomonas putida (Arthrobacter siderocapsulatus).